An 892-amino-acid chain; its full sequence is Exo-beta-D-glucosaminidase (892 aa).

A signal peptide spans 1-18; the sequence is MLANAIAALLLGSGIASA. Positions 19–28 are excised as a propeptide; that stretch reads AGHGSPLTSK. N-linked (GlcNAc...) asparagine glycans are attached at residues asparagine 196, asparagine 336, and asparagine 440. Aspartate 464 functions as the Proton donor in the catalytic mechanism. The active-site Nucleophile is glutamate 539. N-linked (GlcNAc...) asparagine glycosylation is found at asparagine 557, asparagine 578, asparagine 689, and asparagine 825.

This sequence belongs to the glycosyl hydrolase 2 family. In terms of assembly, monomer.

The protein resides in the secreted. Its subcellular location is the extracellular space. The enzyme catalyses Hydrolysis of chitosan or chitosan oligosaccharides to remove successive D-glucosamine residues from the non-reducing termini.. Its function is as follows. Hydrolyzes chitosan and chitooligosaccharides with retention of anomeric configuration. Has no activity against beta-D-galactoside, beta-D-glucuronide, beta-D-mannoside, chitin, glycol chitosan, cellulose, N,N'-diacetylchitibiose and pNP-GlcNAc. The polypeptide is Exo-beta-D-glucosaminidase (Hypocrea jecorina (Trichoderma reesei)).